The following is a 1350-amino-acid chain: Probable serine/threonine-protein kinase DDB_G0278845 (1350 aa).

Disordered stretches follow at residues 66-109 (RELN…NNIR), 121-159 (ENGLLESPTSPIRTSSTPTTPTSPPFITSPPFITSPKGL), 179-249 (LANN…LNSI), 270-296 (SSINGNTTTTTTNTYSYNDNDNVNEYS), 337-396 (NNYN…RDDL), 431-506 (GSTI…EKKK), 525-596 (NDSN…IPTP), and 612-701 (NNNS…NTNE). The span at 84–98 (KYLTSSHSSVVIPQD) shows a compositional bias: polar residues. 2 stretches are compositionally biased toward low complexity: residues 127-140 (SPTSPIRTSSTPTT) and 181-210 (NNNNNNNNSNNSNNNSNSSNSNISCSNNSN). A compositionally biased stretch (polar residues) spans 211-222 (KISRLINNSNTT). The span at 223–235 (DSNASIRSSNNNN) shows a compositional bias: low complexity. The segment covering 236 to 246 (DDFDNNDDEDL) has biased composition (acidic residues). 2 stretches are compositionally biased toward low complexity: residues 270–293 (SSINGNTTTTTTNTYSYNDNDNVN) and 337–391 (NNYN…GYNN). A compositionally biased stretch (polar residues) spans 431-443 (GSTIFTSTSSDIA). Residues 454–482 (NENENENENENENENENDNDSDSENENEN) are compositionally biased toward acidic residues. Low complexity-rich tracts occupy residues 483–495 (DNSIGNKSNKSNS) and 525–551 (NDSNNNNNNNNSGNNNSFISNGSPFSP). Polar residues predominate over residues 565 to 592 (PKPTLQRQRSNSKNVLYSPNASPSNSCK). Low complexity-rich tracts occupy residues 612-637 (NNNSNNIENQNNNNNNIDNNIDNNID), 645-679 (NNNNNNNNNNNNNNNNNNNNNNNNNNNNNNNNNNN), and 690-701 (KKTPNNKINTNE). Residues 756–1082 (FTLIEKIGEG…VENIKNHIFF (327 aa)) enclose the Protein kinase domain. ATP is bound by residues 762–770 (IGEGGFGQV) and Lys-785. Asp-880 functions as the Proton acceptor in the catalytic mechanism. Residues 1083–1203 (NGVPWGKLHD…PRADDQPLLW (121 aa)) form the AGC-kinase C-terminal domain. Disordered regions lie at residues 1129-1159 (SLLPPPLPPPPQTPTQPQQPSLPPQTPNDKM), 1190-1219 (GFTYPRADDQPLLWNNNNNNNNNNNNNNNN), 1232-1285 (NNNN…NKTV), and 1300-1350 (NCNN…KQQQ). A compositionally biased stretch (pro residues) spans 1131–1142 (LPPPLPPPPQTP). Composition is skewed to low complexity over residues 1204 to 1219 (NNNNNNNNNNNNNNNN), 1232 to 1283 (NNNN…SNNK), and 1300 to 1313 (NCNNNNNNDENNIN). 2 stretches are compositionally biased toward polar residues: residues 1314 to 1330 (TGNLTPPNSSPFNSGEN) and 1338 to 1350 (PTSPYGSYSKQQQ).

It belongs to the protein kinase superfamily. AGC Ser/Thr protein kinase family.

The enzyme catalyses L-seryl-[protein] + ATP = O-phospho-L-seryl-[protein] + ADP + H(+). It carries out the reaction L-threonyl-[protein] + ATP = O-phospho-L-threonyl-[protein] + ADP + H(+). The protein is Probable serine/threonine-protein kinase DDB_G0278845 of Dictyostelium discoideum (Social amoeba).